Here is a 498-residue protein sequence, read N- to C-terminus: MLLLELKKTNQTLGTIHFIGIGGVGMSGIAEILHNLGYKVQGSDLVENYNTKRLESYGIKIFLGHAKQNIKNVSYVVISSAIHQNNPEIKEALERKIPIIRRAEMLAELMRLKCSVAVSGSHGKTTTTSLIACLFEAAGLYPTVINGGIINNKSTNAYLGSSNYLIAEADESDATFIHIPSTIAIITNIDPEHLDYYQDFEILIGAFRSFITNLPFYGFAVCCIDHKIVRKLVDDITERKIITYGIDAEDAHIIAFNINTDIASSTFDVKISLPNVLGTTIIEKITIPTPGRHNILNSLAAIAVGIELDFGIKAIKNGFNNFKGVKRRFTKVAEYNQAVIIDDYAHHPEEIKATLATAKNIANQQNGKVIAIFQPHRYSRIKYLFDDFMLCFADADILYITNIYAAGEKPIEGITGQSLVDKMTQNKYHDKANFLAELDDVVSVIIDHAASGDMIIMMGAGNISSFANELDRRLLSQEILASSQNTDFDTSSYDKVIR.

120 to 126 (GSHGKTT) contributes to the ATP binding site.

The protein belongs to the MurCDEF family.

It localises to the cytoplasm. The enzyme catalyses UDP-N-acetyl-alpha-D-muramate + L-alanine + ATP = UDP-N-acetyl-alpha-D-muramoyl-L-alanine + ADP + phosphate + H(+). It participates in cell wall biogenesis; peptidoglycan biosynthesis. Cell wall formation. In Rickettsia typhi (strain ATCC VR-144 / Wilmington), this protein is UDP-N-acetylmuramate--L-alanine ligase.